A 700-amino-acid chain; its full sequence is Mitosis inducer protein blt1 (700 aa).

Polar residues-rich tracts occupy residues 1-11 and 43-53; these read MSKSAFTSKSQ and PRSTALPNLSN. 2 disordered regions span residues 1-53 and 266-293; these read MSKS…NLSN and TNNRKPVGSDGSNSNFNGGEEQMDSKDQ. Over residues 273-284 the composition is skewed to low complexity; it reads GSDGSNSNFNGG. Positions 496–575 form a coiled coil; it reads SVALDDHNRQ…LNMLQKLSMQ (80 aa). 2 disordered regions span residues 634 to 659 and 671 to 700; these read FSSFSGSSSKLPVRPSTALTDKRKPS and SSGSPEKKHVITSSDAGHQRSKSRSFSSKM. Ser-636 carries the post-translational modification Phosphoserine.

Interacts with cdr2, mid1 and sad1.

It is found in the cytoplasm. Its subcellular location is the cytoskeleton. At the onset of mitosis, forms a medial ring structure before the arrangement of the medial actin ring. Essential for the central positioning of the division septum before the cell divides. The protein is Mitosis inducer protein blt1 (blt1) of Schizosaccharomyces pombe (strain 972 / ATCC 24843) (Fission yeast).